A 121-amino-acid polypeptide reads, in one-letter code: MELPQNVQHQLAQFQQLQQQAQAISVQKQTVEMQINETQKALEELSRAADDAEVYKSSGNILIRVAKDELTEELQEKLETLQLREKTIERQEERVMKKLQEMQVNIQEAMKGAGINPGMGN.

Belongs to the prefoldin subunit beta family. As to quaternary structure, heterohexamer of two alpha and four beta subunits.

Its subcellular location is the cytoplasm. In terms of biological role, molecular chaperone capable of stabilizing a range of proteins. Seems to fulfill an ATP-independent, HSP70-like function in archaeal de novo protein folding. The sequence is that of Prefoldin subunit beta (pfdB) from Methanothermobacter thermautotrophicus (strain ATCC 29096 / DSM 1053 / JCM 10044 / NBRC 100330 / Delta H) (Methanobacterium thermoautotrophicum).